We begin with the raw amino-acid sequence, 379 residues long: UDP-4-amino-4-deoxy-L-arabinose--oxoglutarate aminotransferase (379 aa).

Lys-182 bears the N6-(pyridoxal phosphate)lysine mark.

It belongs to the DegT/DnrJ/EryC1 family. ArnB subfamily. In terms of assembly, homodimer. Requires pyridoxal 5'-phosphate as cofactor.

The enzyme catalyses UDP-4-amino-4-deoxy-beta-L-arabinose + 2-oxoglutarate = UDP-beta-L-threo-pentopyranos-4-ulose + L-glutamate. It participates in nucleotide-sugar biosynthesis; UDP-4-deoxy-4-formamido-beta-L-arabinose biosynthesis; UDP-4-deoxy-4-formamido-beta-L-arabinose from UDP-alpha-D-glucuronate: step 2/3. Its pathway is bacterial outer membrane biogenesis; lipopolysaccharide biosynthesis. Catalyzes the conversion of UDP-4-keto-arabinose (UDP-Ara4O) to UDP-4-amino-4-deoxy-L-arabinose (UDP-L-Ara4N). The modified arabinose is attached to lipid A and is required for resistance to polymyxin and cationic antimicrobial peptides. In Klebsiella pneumoniae (strain 342), this protein is UDP-4-amino-4-deoxy-L-arabinose--oxoglutarate aminotransferase.